Consider the following 263-residue polypeptide: H-2 class II histocompatibility antigen, A-S beta chain (263 aa).

An N-terminal signal peptide occupies residues 1-27; the sequence is MALQIPSLLLSAAVVVLMVLSSPGTEG. Residues 28-120 form a beta-1 region; sequence GDSERHFVFQ…VETHTSLRRL (93 aa). The Extracellular portion of the chain corresponds to 28–224; it reads GDSERHFVFQ…RAQSESARSK (197 aa). 2 disulfide bridges follow: Cys42/Cys104 and Cys143/Cys199. N-linked (GlcNAc...) asparagine glycosylation is present at Asn46. A beta-2 region spans residues 121-214; sequence EQPNVVISLS…SLKSPITVEW (94 aa). Residues 123-211 enclose the Ig-like C1-type domain; sequence PNVVISLSRT…EHPSLKSPIT (89 aa). The interval 215–224 is connecting peptide; it reads RAQSESARSK. The helical transmembrane segment at 225 to 245 threads the bilayer; the sequence is MLSGIGGCVLGVIFLGLGLFI. Over 246–263 the chain is Cytoplasmic; the sequence is RHRSQKGPRGPPPAGLLQ.

Belongs to the MHC class II family. Post-translationally, ubiquitinated in immature dendritic cells leading to down-regulation of MHC class II.

Its subcellular location is the membrane. This chain is H-2 class II histocompatibility antigen, A-S beta chain (H2-Ab1), found in Mus musculus (Mouse).